The sequence spans 346 residues: MAQQYKFVFTAEQAASEGVTDHKKLPKLIRKARNLVKAPSKVGAVGRASSGRFYLGVNVEFKGLLPHFSIHAEQFLIANLALNSEPKLTHLAVSDNGTVFQDPCYDCTRFLKEINNAHQIEILIKNAHGRDGSFKSLESHMPDEFGSESILSAEPSLLLMERDNCLALIDEDSAAGGISSNADLCSFLKLEALKAANKSYAPYRKCPSGVALFCEGEVYAGWYIETVDRTISLGPVQAALVDFIARGEGKGFDKITGAVLVEKKDAKVGQEDTARKLLEKIAAPNCDFKVFHCQEERKDWITGAVLVEKKDAKEGQEGKLLEKIAAPNCDFKVSHCDEELKDWIKL.

CMP/dCMP-type deaminase domains follow at residues 20 to 148 (TDHK…FGSE) and 183 to 304 (DLCS…ITGA). 58 to 60 (NVE) is a binding site for substrate. Position 71 (His-71) interacts with Zn(2+). Glu-73 acts as the Proton donor in catalysis. Residues Cys-104 and Cys-107 each coordinate Zn(2+).

It belongs to the cytidine and deoxycytidylate deaminase family. In terms of assembly, homodimer. Zn(2+) serves as cofactor.

The catalysed reaction is cytidine + H2O + H(+) = uridine + NH4(+). It carries out the reaction 2'-deoxycytidine + H2O + H(+) = 2'-deoxyuridine + NH4(+). This enzyme scavenges exogenous and endogenous cytidine and 2'-deoxycytidine for UMP synthesis. This is Cytidine deaminase 5 (CDA5) from Arabidopsis thaliana (Mouse-ear cress).